The following is a 290-amino-acid chain: UPF0761 membrane protein YihY (290 aa).

A run of 6 helical transmembrane segments spans residues 44 to 64 (LLSL…FPMF), 104 to 124 (VGAC…DSAL), 140 to 160 (FAVY…SLAI), 183 to 203 (IFPL…VPTI), 210 to 230 (AIVG…GFAL), and 244 to 264 (VLAV…IVLL).

The protein belongs to the UPF0761 family.

The protein localises to the cell inner membrane. This chain is UPF0761 membrane protein YihY, found in Escherichia coli O1:K1 / APEC.